Reading from the N-terminus, the 311-residue chain is Porphobilinogen deaminase (311 aa).

Cys-243 bears the S-(dipyrrolylmethanemethyl)cysteine mark.

It belongs to the HMBS family. In terms of assembly, monomer. The cofactor is dipyrromethane.

The catalysed reaction is 4 porphobilinogen + H2O = hydroxymethylbilane + 4 NH4(+). Its pathway is porphyrin-containing compound metabolism; protoporphyrin-IX biosynthesis; coproporphyrinogen-III from 5-aminolevulinate: step 2/4. Functionally, tetrapolymerization of the monopyrrole PBG into the hydroxymethylbilane pre-uroporphyrinogen in several discrete steps. The chain is Porphobilinogen deaminase from Blochmanniella floridana.